A 184-amino-acid polypeptide reads, in one-letter code: Cytidylate kinase (184 aa).

8–16 is a binding site for ATP; sequence GQPGSGKTT.

This sequence belongs to the cytidylate kinase family. Type 2 subfamily.

It is found in the cytoplasm. The catalysed reaction is CMP + ATP = CDP + ADP. It carries out the reaction dCMP + ATP = dCDP + ADP. The polypeptide is Cytidylate kinase (Pyrobaculum aerophilum (strain ATCC 51768 / DSM 7523 / JCM 9630 / CIP 104966 / NBRC 100827 / IM2)).